The following is a 300-amino-acid chain: Coatomer subunit epsilon (300 aa).

It belongs to the COPE family. In terms of assembly, oligomeric complex that consists of at least the alpha, beta, beta', gamma, delta, epsilon and zeta subunits.

It is found in the cytoplasm. The protein resides in the golgi apparatus membrane. It localises to the cytoplasmic vesicle. Its subcellular location is the COPI-coated vesicle membrane. In terms of biological role, the coatomer is a cytosolic protein complex that binds to dilysine motifs and reversibly associates with Golgi non-clathrin-coated vesicles, which further mediate biosynthetic protein transport from the ER, via the Golgi up to the trans Golgi network. The coatomer complex is required for budding from Golgi membranes, and is essential for the retrograde Golgi-to-ER transport of dilysine-tagged proteins. The sequence is that of Coatomer subunit epsilon (cope) from Dictyostelium discoideum (Social amoeba).